We begin with the raw amino-acid sequence, 238 residues long: MTDTQQPELTEDGRQRRTIKSFVMRAGRMTEGQQRGLDKGWPLFGLELEDGLRDFDQVFGRSAPRTFEIGFGMGHSTLEMAAAAPEQDFIGVEVHKPGVGALLNGVMAHNLSNVRVYSCDALEVLQGCVADASLDRVLLFFPDPWHKSRHHKRRIVQPAFAELVRRKLKIGGVLHMATDWENYAEHMLEVMNAAPGYRNLAADGTYVPRPEERPVTKFERRGERLGHGVWDLKFQRQE.

S-adenosyl-L-methionine contacts are provided by E68, E93, D120, and D143. D143 is a catalytic residue. Residues K147, D179, and 216–219 (TKFE) each bind substrate.

The protein belongs to the class I-like SAM-binding methyltransferase superfamily. TrmB family.

The enzyme catalyses guanosine(46) in tRNA + S-adenosyl-L-methionine = N(7)-methylguanosine(46) in tRNA + S-adenosyl-L-homocysteine. Its pathway is tRNA modification; N(7)-methylguanine-tRNA biosynthesis. Functionally, catalyzes the formation of N(7)-methylguanine at position 46 (m7G46) in tRNA. This Ectopseudomonas mendocina (strain ymp) (Pseudomonas mendocina) protein is tRNA (guanine-N(7)-)-methyltransferase.